The sequence spans 527 residues: Pyruvate kinase 2, cytosolic (527 aa).

Arg58 contributes to the substrate binding site. Residues Asp60, Ser62, Asp92, and Thr93 each contribute to the K(+) site. Position 60–63 (60–63 (DFSW)) interacts with ATP. Lys256 contributes to the substrate binding site. Mg(2+) is bound at residue Glu258. The substrate site is built by Gly281, Asn282, and Thr313. Residue Asn282 participates in Mg(2+) binding.

Belongs to the pyruvate kinase family. Homotetramer. The cofactor is Mg(2+). Requires K(+) as cofactor.

Its subcellular location is the cytoplasm. It localises to the cytosol. It carries out the reaction pyruvate + ATP = phosphoenolpyruvate + ADP + H(+). It participates in carbohydrate degradation; glycolysis; pyruvate from D-glyceraldehyde 3-phosphate: step 5/5. Its function is as follows. Key regulatory enzyme of the glycolytic pathway that catalyzes the final step of glycolysis, converting ADP and phosphoenolpyruvate (PEP) to ATP and pyruvate by essentially irreversible transphosphorylation. The protein is Pyruvate kinase 2, cytosolic of Oryza sativa subsp. indica (Rice).